We begin with the raw amino-acid sequence, 975 residues long: Nesprin-3 (975 aa).

Topologically, residues 1–925 are cytoplasmic; that stretch reads MTQQPQDDFD…LGSLFRRACC (925 aa). One copy of the Spectrin 1 repeat lies at 220–325; the sequence is REHEEYQAGV…WEEEEERLRG (106 aa). A coiled-coil region spans residues 617-645; that stretch reads NHQHKMDQLSSDFQALQRSLEDLVDRCRQ. The stretch at 647-740 is one Spectrin 2 repeat; it reads VQEHCTFSHQ…RELAESWRAL (94 aa). One can recognise a KASH domain in the interval 917-975; it reads GSLFRRACCVALPLQLLLLLFLLLLFLLPIREEDRSCTLANNFARSFTLMLRYNGPPPT. A helical; Anchor for type IV membrane protein membrane pass occupies residues 926–946; that stretch reads VALPLQLLLLLFLLLLFLLPI. At 947 to 975 the chain is on the perinuclear space side; it reads REEDRSCTLANNFARSFTLMLRYNGPPPT.

It belongs to the nesprin family. As to quaternary structure, core component of LINC complexes which are composed of inner nuclear membrane SUN domain-containing proteins coupled to outer nuclear membrane KASH domain-containing nesprins. SUN and KASH domain-containing proteins seem to bind each other promiscuously; however, differentially expression of LINC complex constituents can give rise to specific assemblies. Interacts with SUN1 and SUN2; probably forming respective LINC complexes. Interacts with PLEC (via actin-binding domain). Interacts with DST. Interacts with SYNE1 via spectrin repeats. Interacts (via KASH domain) with TOR1A (ATP-bound); the interaction is required for SYNE3 nuclear envelope localization. In terms of processing, the disulfid bond with SUN1 or SUN2 is required for stability of the respective LINC complex under tensile forces. In terms of tissue distribution, expressed in aortic endothelial cells (at protein level).

The protein localises to the nucleus outer membrane. Its subcellular location is the nucleus envelope. It localises to the rough endoplasmic reticulum. In terms of biological role, as a component of the LINC (LInker of Nucleoskeleton and Cytoskeleton) complex involved in the connection between the nuclear lamina and the cytoskeleton. The nucleocytoplasmic interactions established by the LINC complex play an important role in the transmission of mechanical forces across the nuclear envelope and in nuclear movement and positioning. Probable anchoring protein which tethers the nucleus to the cytoskeleton by binding PLEC which can associate with the intermediate filament system. Plays a role in the regulation of aortic epithelial cell morphology, and is required for flow-induced centrosome polarization and directional migration in aortic endothelial cells. The chain is Nesprin-3 from Homo sapiens (Human).